The sequence spans 288 residues: HTH-type transcriptional regulator YofA (288 aa).

Positions M1–T58 constitute an HTH lysR-type domain. The segment at residues I18 to Q37 is a DNA-binding region (H-T-H motif).

Belongs to the LysR transcriptional regulatory family.

The protein resides in the cytoplasm. Regulates expression of the cell division protein ftsW, and is essential for cell viability during stationary phase. This is HTH-type transcriptional regulator YofA (yofA) from Bacillus velezensis (strain DSM 23117 / BGSC 10A6 / LMG 26770 / FZB42) (Bacillus amyloliquefaciens subsp. plantarum).